A 678-amino-acid chain; its full sequence is Probable N-methylproline demethylase (678 aa).

FMN is bound by residues Gly-59, Gln-102, Arg-220, Lys-299, and 321–322; that span reads TR. [4Fe-4S] cluster is bound by residues Cys-345, Cys-351, and Cys-363. Ala-396, Glu-415, Gln-423, Arg-433, and Ala-460 together coordinate FAD.

In the N-terminal section; belongs to the NADH:flavin oxidoreductase/NADH oxidase family. FMN is required as a cofactor. It depends on FAD as a cofactor. The cofactor is [4Fe-4S] cluster.

The enzyme catalyses N-methyl-L-proline + NAD(+) + H2O = L-proline + formaldehyde + NADH + H(+). Its pathway is amine and polyamine degradation; stachydrine degradation. In terms of biological role, possible NADH-dependent oxidase, may function as a demethylase that converts N-methylproline to proline. In Rhizobium meliloti (strain 1021) (Ensifer meliloti), this protein is Probable N-methylproline demethylase.